Reading from the N-terminus, the 880-residue chain is Alanine--tRNA ligase (880 aa).

Residues His-567, His-571, Cys-669, and His-673 each contribute to the Zn(2+) site.

It belongs to the class-II aminoacyl-tRNA synthetase family. The cofactor is Zn(2+).

The protein resides in the cytoplasm. The enzyme catalyses tRNA(Ala) + L-alanine + ATP = L-alanyl-tRNA(Ala) + AMP + diphosphate. Functionally, catalyzes the attachment of alanine to tRNA(Ala) in a two-step reaction: alanine is first activated by ATP to form Ala-AMP and then transferred to the acceptor end of tRNA(Ala). Also edits incorrectly charged Ser-tRNA(Ala) and Gly-tRNA(Ala) via its editing domain. The protein is Alanine--tRNA ligase of Syntrophomonas wolfei subsp. wolfei (strain DSM 2245B / Goettingen).